The following is a 200-amino-acid chain: MTLPEKLLKITPKILVIMGSVRSKRLCPTIATWVGEMGKRETNFDYEKVDLTDWPLSMSDEPGLPIMGIDVYTQEHTKAWGSKIAGADGFVFVTPQYNGGYPAILKNALDHLYHEWNGKPLLIVSYGGHGGGDCASQLKHVAGFLKMRVAPTMPALTLPRDKIVQGVVDPAVEFTKHLGELKKAFGEFSQLFESNPERKP.

FMN-binding positions include arginine 22, 96–99, and tyrosine 126; that span reads QYNG.

Homodimer.

The protein resides in the cytoplasm. It is found in the nucleus. The catalysed reaction is FMNH2 + NADP(+) = FMN + NADPH + 2 H(+). The enzyme catalyses FMNH2 + NAD(+) = FMN + NADH + 2 H(+). Functionally, has several reductase activities that are NAD(P)H-dependent and involve FMN as a cofactor. May be involved in ferric iron assimilation. The protein is NAD(P)H-dependent FMN reductase C4B3.06c of Schizosaccharomyces pombe (strain 972 / ATCC 24843) (Fission yeast).